A 144-amino-acid polypeptide reads, in one-letter code: Large ribosomal subunit protein uL16 (144 aa).

The span at 1–17 shows a compositional bias: basic residues; the sequence is MLQPKKTKFRRQQKGRA. Residues 1 to 22 are disordered; sequence MLQPKKTKFRRQQKGRAKGNAQ.

Belongs to the universal ribosomal protein uL16 family. In terms of assembly, part of the 50S ribosomal subunit.

Functionally, binds 23S rRNA and is also seen to make contacts with the A and possibly P site tRNAs. The polypeptide is Large ribosomal subunit protein uL16 (Bacteroides fragilis (strain ATCC 25285 / DSM 2151 / CCUG 4856 / JCM 11019 / LMG 10263 / NCTC 9343 / Onslow / VPI 2553 / EN-2)).